The chain runs to 493 residues: 6-phosphogluconate dehydrogenase, decarboxylating (493 aa).

Residues 12–17 (GLAVMG), 35–37 (NRT), 77–79 (VKA), and N105 contribute to the NADP(+) site. Residues N105 and 131 to 133 (SGG) each bind substrate. K187 (proton acceptor) is an active-site residue. Residue 190-191 (HN) coordinates substrate. E194 functions as the Proton donor in the catalytic mechanism. Substrate contacts are provided by Y195, K266, R293, R456, and H462.

It belongs to the 6-phosphogluconate dehydrogenase family. As to quaternary structure, homodimer.

It catalyses the reaction 6-phospho-D-gluconate + NADP(+) = D-ribulose 5-phosphate + CO2 + NADPH. It functions in the pathway carbohydrate degradation; pentose phosphate pathway; D-ribulose 5-phosphate from D-glucose 6-phosphate (oxidative stage): step 3/3. Catalyzes the oxidative decarboxylation of 6-phosphogluconate to ribulose 5-phosphate and CO(2), with concomitant reduction of NADP to NADPH. The chain is 6-phosphogluconate dehydrogenase, decarboxylating (gnd) from Dictyostelium discoideum (Social amoeba).